Consider the following 449-residue polypeptide: Sensor protein QseC (449 aa).

Residues 1–12 (MKFTQRLSLRVR) are Cytoplasmic-facing. Residues 13-33 (LTLIFLILASVTWLLSSFVAW) form a helical membrane-spanning segment. The Periplasmic portion of the chain corresponds to 34–156 (KQTTDNVDEL…QEWEYREDMA (123 aa)). The helical transmembrane segment at 157–177 (LAIVAGQLIPWLVALPVMLII) threads the bilayer. Topologically, residues 178–449 (MMVLLGRELA…QGGFEAKVSW (272 aa)) are cytoplasmic. One can recognise a Histidine kinase domain in the interval 243 to 449 (DAAHELRSPL…QGGFEAKVSW (207 aa)). A Phosphohistidine; by autocatalysis modification is found at H246.

Its subcellular location is the cell inner membrane. The catalysed reaction is ATP + protein L-histidine = ADP + protein N-phospho-L-histidine.. Its function is as follows. Member of a two-component regulatory system QseB/QseC. Activates the flagella regulon by activating transcription of FlhDC. May activate QseB by phosphorylation. The sequence is that of Sensor protein QseC (qseC) from Escherichia coli O157:H7.